Consider the following 227-residue polypeptide: Orotate phosphoribosyltransferase (227 aa).

Lys-51, Arg-119, Lys-120, and Lys-123 together coordinate 5-phospho-alpha-D-ribose 1-diphosphate. Residues Thr-149 and Arg-177 each contribute to the orotate site.

This sequence belongs to the purine/pyrimidine phosphoribosyltransferase family. PyrE subfamily. Homodimer. As to expression, expressed in body wall muscles, spermatheca and vulva muscles.

The catalysed reaction is orotidine 5'-phosphate + diphosphate = orotate + 5-phospho-alpha-D-ribose 1-diphosphate. The enzyme catalyses UMP + diphosphate = 5-phospho-alpha-D-ribose 1-diphosphate + uracil. It functions in the pathway pyrimidine metabolism; UMP biosynthesis via de novo pathway; UMP from orotate: step 1/2. The protein operates within pyrimidine metabolism; UMP biosynthesis via salvage pathway; UMP from uracil: step 1/1. Phosphoribosyltransferase which catalyzes the formation of UMP from uracil in vitro and thus may be involved in UMP biosynthesis via the salvage pathway. May also participate in the first step of UMP synthesis by catalyzing the formation of orotidine 5'-phosphate, a UMP precursor, from orotate. The chain is Orotate phosphoribosyltransferase from Caenorhabditis elegans.